A 344-amino-acid chain; its full sequence is Follistatin (344 aa).

Positions 1–29 (MARPRHQPGGLCLLLLLLCQFMEDRSAQA) are cleaved as a signal peptide. The TB domain occupies 30–103 (GNCWLRQAKN…TCENVDCGPG (74 aa)). 18 cysteine pairs are disulfide-bonded: Cys32–Cys55, Cys42–Cys88, Cys56–Cys91, Cys95–Cys106, Cys100–Cys116, Cys118–Cys150, Cys122–Cys143, Cys132–Cys164, Cys168–Cys179, Cys173–Cys189, Cys192–Cys225, Cys196–Cys218, Cys207–Cys239, Cys245–Cys256, Cys250–Cys267, Cys270–Cys302, Cys274–Cys295, and Cys284–Cys316. A Follistatin-like 1 domain is found at 94-117 (TCENVDCGPGKKCRMNKKNKPRCV). Residues 112–166 (NKPRCVCAPDCSNITWKGLVCGLDGKTYRNECALLKARCKEQPELQVQYQGKCKK) enclose the Kazal-like 1 domain. A glycan (N-linked (GlcNAc...) asparagine) is linked at Asn124. Residues 167–190 (TCRDVFCPGSSTCVVDQTNNAYCV) enclose the Follistatin-like 2 domain. Residues 186 to 241 (NAYCVTCNRICPEPTSSEQYLCGNDGVTYPSACHLRKATCLLGRSIGLAYEGKCIK) form the Kazal-like 2 domain. Residues 244–268 (SCDDIQCTGGKKCLWDFKVGRGRCS) form the Follistatin-like 3 domain. In terms of domain architecture, Kazal-like 3 spans 261 to 318 (KVGRGRCSLCGELCPESKSEEPVCASDNATYASECAMKEAACSSGVLLEVKHSGSCNS). A glycan (N-linked (GlcNAc...) asparagine) is linked at Asn288. A disordered region spans residues 316–344 (CNSISEDTEDEEEDEDQDYSFPISSILEW). A compositionally biased stretch (acidic residues) spans 321-333 (EDTEDEEEDEDQD).

Monomer.

Its subcellular location is the secreted. Binds directly to activin and functions as an activin antagonist. Specific inhibitor of the biosynthesis and secretion of pituitary follicle stimulating hormone (FSH). This Bubalus bubalis (Domestic water buffalo) protein is Follistatin.